Reading from the N-terminus, the 294-residue chain is Pyridoxal 5'-phosphate synthase subunit PdxS (294 aa).

A D-ribose 5-phosphate-binding site is contributed by Asp-24. Residue Lys-81 is the Schiff-base intermediate with D-ribose 5-phosphate of the active site. Gly-153 contacts D-ribose 5-phosphate. Arg-165 contacts D-glyceraldehyde 3-phosphate. Residues Gly-214 and 235-236 contribute to the D-ribose 5-phosphate site; that span reads GS.

The protein belongs to the PdxS/SNZ family. As to quaternary structure, in the presence of PdxT, forms a dodecamer of heterodimers.

The catalysed reaction is aldehydo-D-ribose 5-phosphate + D-glyceraldehyde 3-phosphate + L-glutamine = pyridoxal 5'-phosphate + L-glutamate + phosphate + 3 H2O + H(+). The protein operates within cofactor biosynthesis; pyridoxal 5'-phosphate biosynthesis. In terms of biological role, catalyzes the formation of pyridoxal 5'-phosphate from ribose 5-phosphate (RBP), glyceraldehyde 3-phosphate (G3P) and ammonia. The ammonia is provided by the PdxT subunit. Can also use ribulose 5-phosphate and dihydroxyacetone phosphate as substrates, resulting from enzyme-catalyzed isomerization of RBP and G3P, respectively. This chain is Pyridoxal 5'-phosphate synthase subunit PdxS, found in Anoxybacillus flavithermus (strain DSM 21510 / WK1).